The sequence spans 988 residues: MPGGKRGLVAPQNTFLENIVRRSSESSFLLGNAQIVDWPVVYSNDGFCKLSGYHRADVMQKSSTCSFMYGELTDKKTIEKVRQTFDNYESNCFEVLLYKKNRTPVWFYMQIAPIRNEHEKVVLFLCTFKDITLFKQPIEDDSTKGWTKFARLTRALTNSRSVLQQLTPMNKTETVHKHSRLAEVLQLGSDILPQYKQEAPKTPPHIILHYCAFKTTWDWVILILTFYTAIMVPYNVSFKTKQNNIAWLVLDSVVDVIFLVDIVLNFHTTFVGPGGEVISDPKLIRMNYLKTWFVIDLLSCLPYDIINAFENVDEGISSLFSSLKVVRLLRLGRVARKLDHYLEYGAAVLVLLVCVFGLVAHWLACIWYSIGDYEVIDEVTNTIQIDSWLYQLALSIGTPYRYNTSAGIWEGGPSKDSLYVSSLYFTMTSLTTIGFGNIAPTTDVEKMFSVAMMMVGSLLYATIFGNVTTIFQQMYANTNRYHEMLNNVRDFLKLYQVPKGLSERVMDYIVSTWSMSKGIDTEKVLSICPKDMRADICVHLNRKVFNEHPAFRLASDGCLRALAVEFQTIHCAPGDLIYHAGESVDALCFVVSGSLEVIQDEEVVAILGKGDVFGDIFWKETTLAHACANVRALTYCDLHIIKREALLKVLDFYTAFANSFSRNLTLTCNLRKRIIFRKISDVKKEEEERLRQKNEVTLSIPVDHPVRKLFQKFKQQKELRIQGSAQSDPERSQLQVESRPLQNGASITGTSVVTVSQITPIQTSLAYVKTSESLKQNNRDAMELKPNGGAEPKCLKVNSPIRMKNGNGKGWLRLKNNMGAQEEKKEDWNNVTKAESMGLLSEDPKGSDSENSVTKNPLRKTDSCDSGITKSDLRLDKAGEARSPLEHSPSQADVKHSFYPIPEQALQTTLQEVKHELKEDIQLLSCRMTALEKQVAEILKLLSEKSVPQTSSPKPQIPLQVPPQIPCQDIFSVSRPESPESDKDEINF.

Residues 1–217 (MPGGKRGLVA…LHYCAFKTTW (217 aa)) are Cytoplasmic-facing. In terms of domain architecture, PAS spans 14-86 (TFLENIVRRS…TIEKVRQTFD (73 aa)). Residues 91-143 (NCFEVLLYKKNRTPVWFYMQIAPIRNEHEKVVLFLCTFKDITLFKQPIEDDST) enclose the PAC domain. Residues 218–238 (DWVILILTFYTAIMVPYNVSF) traverse the membrane as a helical segment. Topologically, residues 239-243 (KTKQN) are extracellular. The helical transmembrane segment at 244–264 (NIAWLVLDSVVDVIFLVDIVL) threads the bilayer. The Cytoplasmic segment spans residues 265-291 (NFHTTFVGPGGEVISDPKLIRMNYLKT). A helical transmembrane segment spans residues 292-312 (WFVIDLLSCLPYDIINAFENV). The Extracellular segment spans residues 313–319 (DEGISSL). A helical; Voltage-sensor transmembrane segment spans residues 320–340 (FSSLKVVRLLRLGRVARKLDH). Residues 341–346 (YLEYGA) are Cytoplasmic-facing. Residues 347-367 (AVLVLLVCVFGLVAHWLACIW) traverse the membrane as a helical segment. Residues 368–419 (YSIGDYEVIDEVTNTIQIDSWLYQLALSIGTPYRYNTSAGIWEGGPSKDSLY) are Extracellular-facing. Asn403 carries N-linked (GlcNAc...) asparagine glycosylation. The segment at residues 420 to 440 (VSSLYFTMTSLTTIGFGNIAP) is an intramembrane region (pore-forming). The Selectivity filter signature appears at 432–437 (TIGFGN). Topologically, residues 441–446 (TTDVEK) are extracellular. The chain crosses the membrane as a helical span at residues 447–467 (MFSVAMMMVGSLLYATIFGNV). Residues 468–988 (TTIFQQMYAN…PESDKDEINF (521 aa)) are Cytoplasmic-facing. 550-668 (AFRLASDGCL…SFSRNLTLTC (119 aa)) is a binding site for a nucleoside 3',5'-cyclic phosphate. The tract at residues 704 to 715 (HPVRKLFQKFKQ) is calmodulin-binding. The interval 721-741 (IQGSAQSDPERSQLQVESRPL) is disordered. A compositionally biased stretch (polar residues) spans 723–741 (GSAQSDPERSQLQVESRPL). Residue Lys785 forms a Glycyl lysine isopeptide (Lys-Gly) (interchain with G-Cter in ubiquitin) linkage. Positions 838 to 893 (GLLSEDPKGSDSENSVTKNPLRKTDSCDSGITKSDLRLDKAGEARSPLEHSPSQAD) are disordered. Basic and acidic residues predominate over residues 871-885 (SDLRLDKAGEARSPL). At Ser883 the chain carries Phosphoserine. Residues 909-948 (TLQEVKHELKEDIQLLSCRMTALEKQVAEILKLLSEKSVP) are CAD (involved in subunit assembly).

It belongs to the potassium channel family. H (Eag) (TC 1.A.1.20) subfamily. Kv10.2/KCNH5 sub-subfamily. In terms of assembly, homotetramer. The potassium channel is probably composed of a homo- or heterotetrameric complex of pore-forming alpha subunits that can associate with modulating beta subunits. Heteromultimer with KCNH1/EAG.

It localises to the membrane. The catalysed reaction is K(+)(in) = K(+)(out). In terms of biological role, pore-forming (alpha) subunit of a voltage-gated delayed rectifier potassium channel that mediates outward-rectifying potassium currents which, on depolarization, reaches a steady-state level and do not inactivate. The kinetic is characterized by a slow activation time course and a small voltage dependence of the activation time constants, therefore, starts to open at more negative voltages. The activation kinetics depend on the prepulse potential and external divalent cation concentration. The time course of activation is biphasic with a fast and a slowly activating current component. With negative prepulses, the current activation is delayed and slowed down several fold, whereas more positive prepulses speed up activation, therefore the activation rate depends on holding potential. This is Voltage-gated delayed rectifier potassium channel KCNH5 from Mus musculus (Mouse).